The sequence spans 189 residues: dCTP deaminase (189 aa).

Residues 112–117 (KSTYAR), 136–138 (TLE), Q157, Y171, and Q181 each bind dCTP. E138 acts as the Proton donor/acceptor in catalysis.

It belongs to the dCTP deaminase family. In terms of assembly, homotrimer.

It catalyses the reaction dCTP + H2O + H(+) = dUTP + NH4(+). It participates in pyrimidine metabolism; dUMP biosynthesis; dUMP from dCTP (dUTP route): step 1/2. Its function is as follows. Catalyzes the deamination of dCTP to dUTP. This chain is dCTP deaminase, found in Xanthomonas euvesicatoria pv. vesicatoria (strain 85-10) (Xanthomonas campestris pv. vesicatoria).